Here is a 527-residue protein sequence, read N- to C-terminus: Probable feruloyl esterase B-2 (527 aa).

A signal peptide spans 1-19 (MAPIHYLLPIITLGSAALA). 2 disulfides stabilise this stretch: cysteine 28/cysteine 75 and cysteine 63/cysteine 114. N-linked (GlcNAc...) asparagine glycans are attached at residues asparagine 53, asparagine 85, asparagine 98, asparagine 138, and asparagine 180. Cystine bridges form between cysteine 187-cysteine 441, cysteine 256-cysteine 273, cysteine 282-cysteine 291, and cysteine 503-cysteine 525. Residue serine 188 is the Acyl-ester intermediate of the active site. 5 residues coordinate Ca(2+): aspartate 257, aspartate 260, alanine 262, aspartate 264, and isoleucine 266. Residues asparagine 311 and asparagine 355 are each glycosylated (N-linked (GlcNAc...) asparagine). Active-site charge relay system residues include aspartate 400 and histidine 440. Asparagine 516 carries N-linked (GlcNAc...) asparagine glycosylation.

Belongs to the tannase family.

The protein localises to the secreted. It catalyses the reaction feruloyl-polysaccharide + H2O = ferulate + polysaccharide.. Its function is as follows. Involved in degradation of plant cell walls. Hydrolyzes the feruloyl-arabinose ester bond in arabinoxylans as well as the feruloyl-galactose and feruloyl-arabinose ester bonds in pectin. In Aspergillus terreus (strain NIH 2624 / FGSC A1156), this protein is Probable feruloyl esterase B-2 (faeB-2).